The sequence spans 562 residues: Putative transport protein Spro_1639 (562 aa).

The next 5 membrane-spanning stretches (helical) occupy residues 8-28, 37-57, 66-86, 94-114, and 158-178; these read LLNGNYILLLFVVLALGLCLG, LGNSIGVLVVSLLLGQQHFAI, FMLFIFCVGVEAGPNFFSIFF, MLALVMVGSAMVIAIGLGKLF, and HLSLGYALTYLIGLVSLIFGA. RCK C-terminal domains follow at residues 202–288 and 290–373; these read LDTD…SFRN and KEVF…KIGF. Helical transmembrane passes span 383 to 403, 406 to 426, 447 to 467, 475 to 495, and 541 to 561; these read LLAFCAFFIIGLLIGQITIQF, FSFGIGNAAGLLMAGIMLGFL, FGLMVFMAGVGLSAGAGIGNS, MLIAGLIVSLVPVVICFLFGA, and IANVLLTLAGSLIVVLWPGIL.

This sequence belongs to the AAE transporter (TC 2.A.81) family. YbjL subfamily.

It localises to the cell membrane. The polypeptide is Putative transport protein Spro_1639 (Serratia proteamaculans (strain 568)).